A 261-amino-acid polypeptide reads, in one-letter code: X-box-binding protein 1 (261 aa).

The Cytoplasmic segment spans residues 1–185 (MVVVAAAPNP…VQAQLSPLQN (185 aa)). The disordered stretch occupies residues 44–93 (RGASPEAASGGLPQARKRQRLTHLSPEEKALRRKLKNRVAAQTARDRKKA). Phosphoserine occurs at positions 47 and 68. The 64-residue stretch at 70–133 (EEKALRRKLK…HGLVVENQEL (64 aa)) folds into the bZIP domain. Residues 72-94 (KALRRKLKNRVAAQTARDRKKAR) form a basic motif region. Residues 75-92 (RRKLKNRVAAQTARDRKK) form a nuclear localization signal (NLS); in isoforms 1 and isoform 2 region. A leucine-zipper region spans residues 98–133 (LEQQVVDLEEENQKLLLENQLLREKTHGLVVENQEL). The helical; Signal-anchor for type II membrane protein transmembrane segment at 186–203 (ISPWILAVLTLQIQSLIS) threads the bilayer. Residues 204–261 (CWAFWTTWTQSCSSNALPQSLPAWRSSQRSTQKDPVPYQPPFLCQWGRHQPSWKPLMN) are Lumenal-facing. Residues 235-261 (QKDPVPYQPPFLCQWGRHQPSWKPLMN) are necessary for the translational pausing of its own mRNA.

Belongs to the bZIP family. Isoform 2 interacts with SIRT1. Isoform 2 interacts with PIK3R1 and PIK3R2; the interactions are direct and induce translocation of XBP1 isoform 2 into the nucleus and the unfolded protein response (UPR) XBP1-dependent target genes activation in a ER stress- and/or insulin-dependent but PI3K-independent manner. Isoform 2 interacts with FOXO1; the interaction is direct and leads to FOXO1 ubiquitination and degradation via the proteasome pathway in hepatocytes. Isoform 1 interacts with HM13. Isoform 1 interacts with RNF139; the interaction induces ubiquitination and degradation of isoform 1. Isoform 1 interacts (via luminal domain) with DERL1; the interaction obviates the need for ectodomain shedding prior HM13/SPP-mediated XBP1 isoform 1 cleavage. Isoform 1 interacts with isoform 2; the interaction sequesters isoform 2 from the nucleus and enhances isoform 2 degradation in the cytoplasm. Isoform 1 interacts with HDAC3 and AKT1; the interactions occur in endothelial cell (EC) under disturbed flow. Isoform 1 interacts with the oncoprotein FOS. Isoform 2 interacts with ATF6; the interaction occurs in a ER stress-dependent manner and is required for DNA binding to the unfolded protein response element (UPRE). Isoform 2 interacts with PIK3R1; the interaction is direct and induces translocation of XBP1 isoform 2 into the nucleus and the unfolded protein response (UPR) XBP1-dependent target genes activation in a ER stress- and/or insulin-dependent but PI3K-independent manner. Acetylated by EP300; acetylation positively regulates the transcriptional activity of XBP1 isoform 2. Isoform 2 is deacetylated by SIRT1; deacetylation negatively regulates the transcriptional activity of XBP1 isoform 2. In terms of processing, ubiquitinated, leading to proteasome-mediated degradation in response to ER stress. Post-translationally, X-box-binding protein 1, cytoplasmic form and luminal form are produced by intramembrane proteolytic cleavage of ER membrane-anchored isoform 1 triggered by HM13/SPP in a DERL1-RNF139-dependent and VCP/p97-independent manner. X-box-binding protein 1, luminal form is ubiquitinated leading to proteasomal degradation. As to expression, expressed in plasma cells in rheumatoid synovium. Over-expressed in primary breast cancer and metastatic breast cancer cells. Isoform 1 and isoform 2 are expressed at higher level in proliferating as compared to confluent quiescent endothelial cells.

The protein resides in the endoplasmic reticulum. It is found in the nucleus. It localises to the cytoplasm. The protein localises to the endoplasmic reticulum membrane. Its subcellular location is the membrane. Functionally, functions as a transcription factor during endoplasmic reticulum (ER) stress by regulating the unfolded protein response (UPR). Required for cardiac myogenesis and hepatogenesis during embryonic development, and the development of secretory tissues such as exocrine pancreas and salivary gland. Involved in terminal differentiation of B lymphocytes to plasma cells and production of immunoglobulins. Modulates the cellular response to ER stress in a PIK3R-dependent manner. Binds to the cis-acting X box present in the promoter regions of major histocompatibility complex class II genes. Involved in VEGF-induced endothelial cell (EC) proliferation and retinal blood vessel formation during embryonic development but also for angiogenesis in adult tissues under ischemic conditions. Also functions as a major regulator of the UPR in obesity-induced insulin resistance and type 2 diabetes for the management of obesity and diabetes prevention. Its function is as follows. Plays a role in the unconventional cytoplasmic splicing processing of its own mRNA triggered by the endoplasmic reticulum (ER) transmembrane endoribonuclease ERN1: upon ER stress, the emerging XBP1 polypeptide chain, as part of a mRNA-ribosome-nascent chain (R-RNC) complex, cotranslationally recruits its own unprocessed mRNA through transient docking to the ER membrane and translational pausing, therefore facilitating efficient IRE1-mediated XBP1 mRNA isoform 2 production. In endothelial cells (EC), associated with KDR, promotes IRE1-mediated XBP1 mRNA isoform 2 productions in a vascular endothelial growth factor (VEGF)-dependent manner, leading to EC proliferation and angiogenesis. Functions as a negative feed-back regulator of the potent transcription factor XBP1 isoform 2 protein levels through proteasome-mediated degradation, thus preventing the constitutive activation of the ER stress response signaling pathway. Inhibits the transactivation activity of XBP1 isoform 2 in myeloma cells. Acts as a weak transcriptional factor. Together with HDAC3, contributes to the activation of NFE2L2-mediated HMOX1 transcription factor gene expression in a PI(3)K/mTORC2/Akt-dependent signaling pathway leading to EC survival under disturbed flow/oxidative stress. Binds to the ER stress response element (ERSE) upon ER stress. Binds to the consensus 5'-GATGACGTG[TG]N(3)[AT]T-3' sequence related to cAMP responsive element (CRE)-like sequences. Binds the Tax-responsive element (TRE) present in the long terminal repeat (LTR) of T-cell leukemia virus type 1 (HTLV-I) and to the TPA response elements (TRE). Associates preferentially to the HDAC3 gene promoter region in a static flow-dependent manner. Binds to the CDH5/VE-cadherin gene promoter region. Functions as a stress-inducible potent transcriptional activator during endoplasmic reticulum (ER) stress by inducing unfolded protein response (UPR) target genes via binding to the UPR element (UPRE). Up-regulates target genes encoding ER chaperones and ER-associated degradation (ERAD) components to enhance the capacity of productive folding and degradation mechanism, respectively, in order to maintain the homeostasis of the ER under ER stress. Plays a role in the production of immunoglobulins and interleukin-6 in the presence of stimuli required for plasma cell differentiation. Induces phospholipid biosynthesis and ER expansion. Contributes to the VEGF-induced endothelial cell (EC) growth and proliferation in a Akt/GSK-dependent and/or -independent signaling pathway, respectively, leading to beta-catenin nuclear translocation and E2F2 gene expression. Promotes umbilical vein EC apoptosis and atherosclerotisis development in a caspase-dependent signaling pathway, and contributes to VEGF-induced EC proliferation and angiogenesis in adult tissues under ischemic conditions. Involved in the regulation of endostatin-induced autophagy in EC through BECN1 transcriptional activation. Plays a role as an oncogene by promoting tumor progression: stimulates zinc finger protein SNAI1 transcription to induce epithelial-to-mesenchymal (EMT) transition, cell migration and invasion of breast cancer cells. Involved in adipocyte differentiation by regulating lipogenic gene expression during lactation. Plays a role in the survival of both dopaminergic neurons of the substantia nigra pars compacta (SNpc), by maintaining protein homeostasis and of myeloma cells. Increases insulin sensitivity in the liver as a response to a high carbohydrate diet, resulting in improved glucose tolerance. Also improves glucose homeostasis in an ER stress- and/or insulin-independent manner through both binding and proteasome-induced degradation of the transcription factor FOXO1, hence resulting in suppression of gluconeogenic genes expression and in a reduction of blood glucose levels. Controls the induction of de novo fatty acid synthesis in hepatocytes by regulating the expression of a subset of lipogenic genes in an ER stress- and UPR-independent manner. Associates preferentially to the HDAC3 gene promoter region in a disturbed flow-dependent manner. Binds to the BECN1 gene promoter region. Binds to the CDH5/VE-cadherin gene promoter region. Binds to the ER stress response element (ERSE) upon ER stress. Binds to the 5'-CCACG-3' motif in the PPARG promoter. The polypeptide is X-box-binding protein 1 (Homo sapiens (Human)).